Reading from the N-terminus, the 535-residue chain is UDP-N-acetylmuramoyl-L-alanyl-D-glutamate--2,6-diaminopimelate ligase (535 aa).

Leu-67 is a UDP-N-acetyl-alpha-D-muramoyl-L-alanyl-D-glutamate binding site. 153 to 159 (GTSGKTT) is a binding site for ATP. Residues 195-196 (TT), Ser-222, and Arg-230 each bind UDP-N-acetyl-alpha-D-muramoyl-L-alanyl-D-glutamate. N6-carboxylysine is present on Lys-262. Residues Arg-424, 448-451 (DNPR), Gly-502, and Glu-506 each bind meso-2,6-diaminopimelate. The Meso-diaminopimelate recognition motif motif lies at 448 to 451 (DNPR).

Belongs to the MurCDEF family. MurE subfamily. Mg(2+) is required as a cofactor. In terms of processing, carboxylation is probably crucial for Mg(2+) binding and, consequently, for the gamma-phosphate positioning of ATP.

It is found in the cytoplasm. It catalyses the reaction UDP-N-acetyl-alpha-D-muramoyl-L-alanyl-D-glutamate + meso-2,6-diaminopimelate + ATP = UDP-N-acetyl-alpha-D-muramoyl-L-alanyl-gamma-D-glutamyl-meso-2,6-diaminopimelate + ADP + phosphate + H(+). It participates in cell wall biogenesis; peptidoglycan biosynthesis. Its function is as follows. Catalyzes the addition of meso-diaminopimelic acid to the nucleotide precursor UDP-N-acetylmuramoyl-L-alanyl-D-glutamate (UMAG) in the biosynthesis of bacterial cell-wall peptidoglycan. This is UDP-N-acetylmuramoyl-L-alanyl-D-glutamate--2,6-diaminopimelate ligase from Mycobacterium bovis (strain ATCC BAA-935 / AF2122/97).